We begin with the raw amino-acid sequence, 385 residues long: Spermidine/putrescine import ATP-binding protein PotA (385 aa).

Residues 27 to 257 enclose the ABC transporter domain; it reads ASFRAVSKHY…PANLFVAQFA (231 aa). 59–66 is a binding site for ATP; that stretch reads GPSGCGKT.

The protein belongs to the ABC transporter superfamily. Spermidine/putrescine importer (TC 3.A.1.11.1) family. As to quaternary structure, the complex is composed of two ATP-binding proteins (PotA), two transmembrane proteins (PotB and PotC) and a solute-binding protein (PotD).

Its subcellular location is the cell inner membrane. It catalyses the reaction ATP + H2O + polyamine-[polyamine-binding protein]Side 1 = ADP + phosphate + polyamineSide 2 + [polyamine-binding protein]Side 1.. Functionally, part of the ABC transporter complex PotABCD involved in spermidine/putrescine import. Responsible for energy coupling to the transport system. The sequence is that of Spermidine/putrescine import ATP-binding protein PotA from Methylococcus capsulatus (strain ATCC 33009 / NCIMB 11132 / Bath).